The following is an 877-amino-acid chain: MQDKYSPSDVEQQAQQHWQALDAYRVTEHARAADGSDKPKFYACSMLPYPSGKLHMGHVRNYTINDVMTRQLRMKGYNVLMPMGWDAFGMPAENAALNNGVAPAAWTYDNIAYMKKQMQSMGLAIDWSREVATCSPDYYRWNQWLFLKMLEKGIAYRKTGTVNWDPVDQTVLANEQVIDGRGWRSGAVVEKREIPMYYLGITKYAQELLSDLDPLGWPERVKLMQQNWIGKSEGVRFAFPHNISGDDGKLINDGKLYVFTTRADTIMGVTFCAVAAEHPIATHAAQSNPALAAFIEECKHGSVMEADMATMEKKGMPTGLTVTHPLTGESVPVWVGNYVLMTYGDGAVMGVPAHDERDFAFANKYHLPIKQVIDVKGQSYDTTTWADWYGDKEHGVLFHSGKYDGLNYQQAVDAVAADLAAQGLGEKKTTWRLRDWGISRQRYWGTPIPLIHCESCGVVPVPEQDLPVRLPEDLVPDGTGNPLAKDPRFLNCTCPSCGKPARRETDTMDTFIDSCWYYMRYTCPDGETMVDARNDYWMPMDQYIGGIEHAILHLLYARFWTKVMRDLGLVKFDEPFTNLLTQGMVLNETYYREDASGKKQWINPADVDVQTDERGRPVGATLKADGQPVVIGGVEKMSKSKNNGIDPQALIDQYGADTARLFTMFAAPPEQQLEWNDAGVEGASRFLRRLWNFGVVHGDAIRGGHGNGVVAGATDADRALRRELYTVLKQANYDYERLQYNTVVSATMKMLNALEGAKDAGADARREGLGLLLRVLYPVVPHITHVLWTELGYAGAYGDLLDAPWPQVDEGALVQSEIELVLQVNGKVRGSIVVPADADRAAIEAIAAKDEAVQKFAEGKPPKKIIVVPGRLVNVVA.

Positions 48 to 58 match the 'HIGH' region motif; that stretch reads PYPSGKLHMGH. The 'KMSKS' region signature appears at 636-640; the sequence is KMSKS. Position 639 (Lys639) interacts with ATP.

Belongs to the class-I aminoacyl-tRNA synthetase family.

Its subcellular location is the cytoplasm. The enzyme catalyses tRNA(Leu) + L-leucine + ATP = L-leucyl-tRNA(Leu) + AMP + diphosphate. The polypeptide is Leucine--tRNA ligase (Ralstonia pickettii (strain 12J)).